The following is a 217-amino-acid chain: UPF0502 protein KPN78578_10500 (217 aa).

This sequence belongs to the UPF0502 family.

The sequence is that of UPF0502 protein KPN78578_10500 from Klebsiella pneumoniae subsp. pneumoniae (strain ATCC 700721 / MGH 78578).